A 1321-amino-acid chain; its full sequence is MSDSVILRSVKKFGEENHGFESDGSYNNEKKSRLQDKKKSDSVRIGFFQLFRFSSWTDIWLMCMGSLCACIHGIAQPGVLLIFGTMTDVFIDYDTELQELKIPGKACVNNTIVWINSSLNQNVTNGTRCGLLDIESEMIRFAGYYAGIGIAVLTTGYIQICFWGIAAAHQIQKMRKSYFRKIMRMGIGWVDCNSVGKLNTPFSVDFNKINDSSADQLAIFIQGMTSPIFGFLVGFSQWWKLTLVIISVSPLIGLGAAIIGLSVSKFTDYELKAYAKAGSVADEVISSMRTVAAFGGEKKEVERYEKNLVFAQRWGIRKGIVMGFFTGYMWCLIFFCYALAFWYGSKLVLEEGEYSPGALVQIFLSVIIGALNLGNASPCLEAFAAGRAAASSIFETIDRKPIIDCMSEDGYKLERIKGEIEFHNVTFHYPSRPEVKILNNLSMVIKPGEMTALVGPSGAGKSTALQLIHRFYGPTEGMVTVESHDIRSSHIQWLRNQIGIVEQEPVLFFHTIAEKIRYGREDATMEDLIQAAKEANAYNFIMDLPQQFDTLVGEGGGQMSGGQKQRVAIARALIRNPKILLLDMATSALDNESEAMVQEALSKTQHGHTIVSVAHRPATIRTADVIIGCEHGAAVERGTEEELLERKGVYFALVTLQSQRNQGDQEENEKDATEDDIPEKTFSRGNYQDSLRASLRQRSKSQLSYLAHEPPMAVEDHKSTHEEDRKDKDLPAQEDIEPASVRRIMKLNAPEWPYMLLGSMGAAVNGAVTPLYAFLFSQILGTFSLPDKEEQRSQINGICLLFVTLGCVSFFTQFLQGYTFAKSGELLTKRLRKFGFRAMLGQDIGWFDDLRNSPGALTTRLATDASQVQGATGSQIGMMVNSFTNVTVAMIIAFLFSWKLTLGIVCFFPFLALSGALQTKMLTGFASRDKQALEKAGQITSEALSNIRTVAGIGKERKFIETFEAELEKPYKMAIKKANVYGLCFGFSQCITFIANSASYRYGGYLISNEGLHFSYVFRVISAVVLSATALGRASSYTPSYAKAKISAARFFQLLDRQPPINVYSSAGEKWDNFQGKIDFVDCKFTYPSRPDIQVLNGLSVSMSPRQTLAFVGSSGCGKSTSIQLLERFYDPDHGKVMIDGHDSRKVNIQFLRSNIGIVSQEPVLFACSIKDNIKYGDNTQEIPMERIIAAAKKAQVHDFVMSLPEKYETNVGSQGSQLSRGEKQRIAIARAIVRDPKILLLDEATSALDTESEKTVQVALDKAREGRTCIVIAHRLSTIQNSDIIAVMSQGMVIEKGTHEELMVQKGAYYKLVTTGSPIS.

The Cytoplasmic portion of the chain corresponds to 1 to 62; it reads MSDSVILRSV…FSSWTDIWLM (62 aa). Residues 62–385 form the ABC transmembrane type-1 1 domain; it reads MCMGSLCACI…ASPCLEAFAA (324 aa). A helical membrane pass occupies residues 63-83; that stretch reads CMGSLCACIHGIAQPGVLLIF. The Extracellular portion of the chain corresponds to 84-147; it reads GTMTDVFIDY…MIRFAGYYAG (64 aa). Asn109, Asn116, Asn122, and Asn125 each carry an N-linked (GlcNAc...) asparagine glycan. Residues 148–168 form a helical membrane-spanning segment; it reads IGIAVLTTGYIQICFWGIAAA. The Cytoplasmic portion of the chain corresponds to 169-215; sequence HQIQKMRKSYFRKIMRMGIGWVDCNSVGKLNTPFSVDFNKINDSSAD. Residues 216–236 form a helical membrane-spanning segment; the sequence is QLAIFIQGMTSPIFGFLVGFS. At 237–240 the chain is on the extracellular side; the sequence is QWWK. A helical membrane pass occupies residues 241–261; that stretch reads LTLVIISVSPLIGLGAAIIGL. Topologically, residues 262 to 319 are cytoplasmic; the sequence is SVSKFTDYELKAYAKAGSVADEVISSMRTVAAFGGEKKEVERYEKNLVFAQRWGIRKG. A helical membrane pass occupies residues 320-340; sequence IVMGFFTGYMWCLIFFCYALA. Residues 341–353 are Extracellular-facing; sequence FWYGSKLVLEEGE. The helical transmembrane segment at 354–374 threads the bilayer; it reads YSPGALVQIFLSVIIGALNLG. Residues 375–755 are Cytoplasmic-facing; it reads NASPCLEAFA…KLNAPEWPYM (381 aa). Positions 420 to 656 constitute an ABC transporter 1 domain; sequence IEFHNVTFHY…KGVYFALVTL (237 aa). Residue 455–462 coordinates ATP; it reads GPSGAGKS. Residue Thr586 is modified to Phosphothreonine. Ser587 is modified (phosphoserine). Positions 651 to 672 are interaction with HAX1; the sequence is FALVTLQSQRNQGDQEENEKDA. A disordered region spans residues 659–735; the sequence is QRNQGDQEEN…KDKDLPAQED (77 aa). The segment covering 664-677 has biased composition (acidic residues); that stretch reads DQEENEKDATEDDI. Phosphoserine is present on residues Ser690, Ser701, and Ser704. The span at 714–731 shows a compositional bias: basic and acidic residues; it reads VEDHKSTHEEDRKDKDLP. Residues 755 to 1043 form the ABC transmembrane type-1 2 domain; the sequence is MLLGSMGAAV…ASSYTPSYAK (289 aa). A helical membrane pass occupies residues 756–776; the sequence is LLGSMGAAVNGAVTPLYAFLF. Residues 777–794 are Extracellular-facing; that stretch reads SQILGTFSLPDKEEQRSQ. A helical membrane pass occupies residues 795-815; sequence INGICLLFVTLGCVSFFTQFL. The Cytoplasmic portion of the chain corresponds to 816 to 869; it reads QGYTFAKSGELLTKRLRKFGFRAMLGQDIGWFDDLRNSPGALTTRLATDASQVQ. A run of 2 helical transmembrane segments spans residues 870–890 and 891–911; these read GATG…TVAM and IIAF…FPFL. The Cytoplasmic portion of the chain corresponds to 912-979; it reads ALSGALQTKM…PYKMAIKKAN (68 aa). A helical membrane pass occupies residues 980-1000; the sequence is VYGLCFGFSQCITFIANSASY. Over 1001-1011 the chain is Extracellular; that stretch reads RYGGYLISNEG. A helical membrane pass occupies residues 1012-1032; the sequence is LHFSYVFRVISAVVLSATALG. Residues 1033–1321 are Cytoplasmic-facing; the sequence is RASSYTPSYA…KLVTTGSPIS (289 aa). Positions 1078–1316 constitute an ABC transporter 2 domain; the sequence is IDFVDCKFTY…KGAYYKLVTT (239 aa). 1113–1120 serves as a coordination point for ATP; sequence GSSGCGKS. 2 positions are modified to phosphoserine: Ser1214 and Ser1321.

Belongs to the ABC transporter superfamily. ABCB family. Multidrug resistance exporter (TC 3.A.1.201) subfamily. As to quaternary structure, interacts with HAX1. Interacts with the adapter protein complex 2 (AP-2) throught AP2A2 or AP2A1; this interaction regulates cell membrane expression of ABCB11 through its internalization in a clathrin-dependent manner and its subsequent degradation. N-glycosylated. In terms of processing, ubiquitinated; short-chain ubiquitination regulates cell-Surface expression of ABCB11. Expressed predominantly, if not exclusively in the liver, where it was further localized to the canalicular microvilli and to subcanalicular vesicles of the hepatocytes by in situ.

It is found in the apical cell membrane. The protein resides in the recycling endosome membrane. It localises to the endosome. Its subcellular location is the cell membrane. The catalysed reaction is cholate(in) + ATP + H2O = cholate(out) + ADP + phosphate + H(+). The enzyme catalyses taurocholate(in) + ATP + H2O = taurocholate(out) + ADP + phosphate + H(+). It carries out the reaction glycocholate(in) + ATP + H2O = glycocholate(out) + ADP + phosphate + H(+). It catalyses the reaction glycochenodeoxycholate(in) + ATP + H2O = glycochenodeoxycholate(out) + ADP + phosphate + H(+). The catalysed reaction is taurochenodeoxycholate(in) + ATP + H2O = taurochenodeoxycholate(out) + ADP + phosphate + H(+). The enzyme catalyses glycoursodeoxycholate(in) + ATP + H2O = glycoursodeoxycholate(out) + ADP + phosphate + H(+). It carries out the reaction tauroursodeoxycholate(in) + ATP + H2O = tauroursodeoxycholate(out) + ADP + phosphate + H(+). It catalyses the reaction taurodeoxycholate(in) + ATP + H2O = taurodeoxycholate(out) + ADP + phosphate + H(+). The catalysed reaction is taurolithocholate 3-sulfate(in) + ATP + H2O = taurolithocholate 3-sulfate(out) + ADP + phosphate + H(+). The enzyme catalyses pravastatin(in) + ATP + H2O = pravastatin(out) + ADP + phosphate + H(+). The uptake of taurocholate is inhibited by taurolithocholate sulfate with an IC(50) of 9 uM. Pravastatin competitively inhibits the transport of taurocholic acid. Cyclosporin A, glibenclamide, rifampicin and troglitazonestrongly competitively inhibit the transport activity of taurocholate. The canalicular transport activity of taurocholate is strongly dependent on canalicular membrane cholesterol content. The uptake of taurocholate is increased by short- and medium-chain fatty acids. Cholesterol increases transport capacity of taurocholate without affecting the affinity for the substrate. In terms of biological role, catalyzes the transport of the major hydrophobic bile salts, such as taurine and glycine-conjugated cholic acid across the canalicular membrane of hepatocytes in an ATP-dependent manner, therefore participates in hepatic bile acid homeostasis and consequently to lipid homeostasis through regulation of biliary lipid secretion in a bile salts dependent manner. Transports taurine-conjugated bile salts more rapidly than glycine-conjugated bile salts. Also transports non-bile acid compounds, such as pravastatin and fexofenadine in an ATP-dependent manner and may be involved in their biliary excretion. This chain is Bile salt export pump, found in Oryctolagus cuniculus (Rabbit).